Reading from the N-terminus, the 233-residue chain is 2,3-bisphosphoglycerate-dependent phosphoglycerate mutase (233 aa).

Residues 8–15, 21–22, Arg60, 116–119, Lys127, 143–144, and 187–188 contribute to the substrate site; these read RHGQSLWN, TG, ERYY, RR, and GN. The active-site Tele-phosphohistidine intermediate is His9. The active-site Proton donor/acceptor is Glu116.

Belongs to the phosphoglycerate mutase family. BPG-dependent PGAM subfamily.

It carries out the reaction (2R)-2-phosphoglycerate = (2R)-3-phosphoglycerate. Its pathway is carbohydrate degradation; glycolysis; pyruvate from D-glyceraldehyde 3-phosphate: step 3/5. In terms of biological role, catalyzes the interconversion of 2-phosphoglycerate and 3-phosphoglycerate. The protein is 2,3-bisphosphoglycerate-dependent phosphoglycerate mutase of Gloeothece citriformis (strain PCC 7424) (Cyanothece sp. (strain PCC 7424)).